The sequence spans 463 residues: ATP sulfurylase 1, chloroplastic (463 aa).

A chloroplast-targeting transit peptide spans 1–48 (MASMAAVLSKTPFLSQPLTKSSPNSDLPFAAVSFPSKSLRRRVGSIRA).

Belongs to the sulfate adenylyltransferase family. Homotetramer.

It is found in the plastid. The protein resides in the chloroplast stroma. It catalyses the reaction sulfate + ATP + H(+) = adenosine 5'-phosphosulfate + diphosphate. It functions in the pathway sulfur metabolism; hydrogen sulfide biosynthesis; sulfite from sulfate: step 1/3. Functionally, mediates selenate (Se) reduction, and promotes Se and sulfur (S) uptake and assimilation. The sequence is that of ATP sulfurylase 1, chloroplastic (APS1) from Arabidopsis thaliana (Mouse-ear cress).